Here is a 486-residue protein sequence, read N- to C-terminus: Protein ZINC INDUCED FACILITATOR 1 (486 aa).

12 consecutive transmembrane segments (helical) span residues 41 to 61, 82 to 102, 109 to 129, 131 to 151, 170 to 190, 212 to 232, 288 to 308, 327 to 347, 362 to 384, 391 to 408, 423 to 443, and 461 to 481; these read FVWI…PFLY, FVGC…GIVA, PIIL…GLSS, FWMA…LGTM, AVST…GFLA, ALPC…CCFI, IIVY…FALW, TVLA…YPLA, ALMI…SLSL, ILIN…LILQ, IAMT…GILF, and VFFV…KPFL.

It belongs to the major facilitator superfamily. As to expression, strongly expressed in developing leaves, differentiating zones of root tips and sepals of developing flowers. Restricted to vascular tissues in older leaves, mature roots, flowers, anthers and filaments. Not expressed in developing anthers.

It is found in the vacuole membrane. Functionally, major facilitator superfamily (MFS) transporter involved in zinc tolerance by participating in vacuolar sequestration of zinc. The polypeptide is Protein ZINC INDUCED FACILITATOR 1 (ZIF1) (Arabidopsis thaliana (Mouse-ear cress)).